We begin with the raw amino-acid sequence, 217 residues long: ATP phosphoribosyltransferase (217 aa).

It belongs to the ATP phosphoribosyltransferase family. Short subfamily. In terms of assembly, heteromultimer composed of HisG and HisZ subunits.

The protein localises to the cytoplasm. The catalysed reaction is 1-(5-phospho-beta-D-ribosyl)-ATP + diphosphate = 5-phospho-alpha-D-ribose 1-diphosphate + ATP. It participates in amino-acid biosynthesis; L-histidine biosynthesis; L-histidine from 5-phospho-alpha-D-ribose 1-diphosphate: step 1/9. Catalyzes the condensation of ATP and 5-phosphoribose 1-diphosphate to form N'-(5'-phosphoribosyl)-ATP (PR-ATP). Has a crucial role in the pathway because the rate of histidine biosynthesis seems to be controlled primarily by regulation of HisG enzymatic activity. This Polaromonas naphthalenivorans (strain CJ2) protein is ATP phosphoribosyltransferase.